Here is a 195-residue protein sequence, read N- to C-terminus: Phosphoheptose isomerase (195 aa).

The SIS domain occupies 36 to 195 (VSKVLQSGNT…IVEYNLFKME (160 aa)). 51 to 53 (NGG) provides a ligand contact to substrate. Zn(2+)-binding residues include histidine 60 and glutamate 64. Substrate-binding positions include glutamate 64, 95-96 (ND), 121-123 (STS), serine 126, and glutamine 173. Zn(2+)-binding residues include glutamine 173 and histidine 181.

The protein belongs to the SIS family. GmhA subfamily. It depends on Zn(2+) as a cofactor.

It localises to the cytoplasm. The enzyme catalyses 2 D-sedoheptulose 7-phosphate = D-glycero-alpha-D-manno-heptose 7-phosphate + D-glycero-beta-D-manno-heptose 7-phosphate. It participates in carbohydrate biosynthesis; D-glycero-D-manno-heptose 7-phosphate biosynthesis; D-glycero-alpha-D-manno-heptose 7-phosphate and D-glycero-beta-D-manno-heptose 7-phosphate from sedoheptulose 7-phosphate: step 1/1. In terms of biological role, catalyzes the isomerization of sedoheptulose 7-phosphate in D-glycero-D-manno-heptose 7-phosphate. The protein is Phosphoheptose isomerase of Leptospira borgpetersenii serovar Hardjo-bovis (strain JB197).